The sequence spans 149 residues: Large ribosomal subunit protein bL9 (149 aa).

The protein belongs to the bacterial ribosomal protein bL9 family.

Its function is as follows. Binds to the 23S rRNA. This Helicobacter pylori (strain ATCC 700392 / 26695) (Campylobacter pylori) protein is Large ribosomal subunit protein bL9.